Consider the following 440-residue polypeptide: Xylose isomerase (440 aa).

Residues H101 and D104 contribute to the active site. Mg(2+) is bound by residues E232, E268, H271, D296, D307, D309, and D339.

Belongs to the xylose isomerase family. As to quaternary structure, homotetramer. Requires Mg(2+) as cofactor.

It localises to the cytoplasm. It carries out the reaction alpha-D-xylose = alpha-D-xylulofuranose. The chain is Xylose isomerase from Escherichia fergusonii (strain ATCC 35469 / DSM 13698 / CCUG 18766 / IAM 14443 / JCM 21226 / LMG 7866 / NBRC 102419 / NCTC 12128 / CDC 0568-73).